The sequence spans 164 residues: Leucine-rich single-pass membrane protein 2 (164 aa).

A helical transmembrane segment spans residues 97-117 (GFLLLLALLVLTCLVLALLAV).

The protein resides in the membrane. This chain is Leucine-rich single-pass membrane protein 2 (LSMEM2), found in Homo sapiens (Human).